Here is a 205-residue protein sequence, read N- to C-terminus: Large ribosomal subunit protein bL25 (205 aa).

It belongs to the bacterial ribosomal protein bL25 family. CTC subfamily. In terms of assembly, part of the 50S ribosomal subunit; part of the 5S rRNA/L5/L18/L25 subcomplex. Contacts the 5S rRNA. Binds to the 5S rRNA independently of L5 and L18.

Functionally, this is one of the proteins that binds to the 5S RNA in the ribosome where it forms part of the central protuberance. The polypeptide is Large ribosomal subunit protein bL25 (Bartonella bacilliformis (strain ATCC 35685 / KC583 / Herrer 020/F12,63)).